The primary structure comprises 376 residues: Putative F-box protein At1g30930 (376 aa).

The 44-residue stretch at 1 to 44 (MKNSIPIDLIIEIVSRSTAKSVARCHCVSKQWRAIFRRKYFIEL) folds into the F-box domain.

In Arabidopsis thaliana (Mouse-ear cress), this protein is Putative F-box protein At1g30930.